A 62-amino-acid chain; its full sequence is UPF0337 protein XAC0100 (62 aa).

This sequence belongs to the UPF0337 (CsbD) family.

This chain is UPF0337 protein XAC0100, found in Xanthomonas axonopodis pv. citri (strain 306).